A 194-amino-acid polypeptide reads, in one-letter code: Ion-translocating oxidoreductase complex subunit A (194 aa).

The next 6 membrane-spanning stretches (helical) occupy residues Met1–Val21, Cys48–Phe68, Leu73–Val93, Leu103–Met123, Val135–Ile155, and Pro172–Ile192.

It belongs to the NqrDE/RnfAE family. The complex is composed of six subunits: RnfA, RnfB, RnfC, RnfD, RnfE and RnfG.

It localises to the cell inner membrane. Functionally, part of a membrane-bound complex that couples electron transfer with translocation of ions across the membrane. The sequence is that of Ion-translocating oxidoreductase complex subunit A from Buchnera aphidicola subsp. Baizongia pistaciae (strain Bp).